The primary structure comprises 393 residues: NAD(P)H-quinone oxidoreductase subunit H, chloroplastic (393 aa).

The protein belongs to the complex I 49 kDa subunit family. In terms of assembly, NDH is composed of at least 16 different subunits, 5 of which are encoded in the nucleus.

It localises to the plastid. The protein localises to the chloroplast thylakoid membrane. The enzyme catalyses a plastoquinone + NADH + (n+1) H(+)(in) = a plastoquinol + NAD(+) + n H(+)(out). The catalysed reaction is a plastoquinone + NADPH + (n+1) H(+)(in) = a plastoquinol + NADP(+) + n H(+)(out). In terms of biological role, NDH shuttles electrons from NAD(P)H:plastoquinone, via FMN and iron-sulfur (Fe-S) centers, to quinones in the photosynthetic chain and possibly in a chloroplast respiratory chain. The immediate electron acceptor for the enzyme in this species is believed to be plastoquinone. Couples the redox reaction to proton translocation, and thus conserves the redox energy in a proton gradient. The protein is NAD(P)H-quinone oxidoreductase subunit H, chloroplastic of Liriodendron tulipifera (Tuliptree).